The following is a 581-amino-acid chain: Proline--tRNA ligase (581 aa).

It belongs to the class-II aminoacyl-tRNA synthetase family. ProS type 1 subfamily. In terms of assembly, homodimer.

It localises to the cytoplasm. It carries out the reaction tRNA(Pro) + L-proline + ATP = L-prolyl-tRNA(Pro) + AMP + diphosphate. In terms of biological role, catalyzes the attachment of proline to tRNA(Pro) in a two-step reaction: proline is first activated by ATP to form Pro-AMP and then transferred to the acceptor end of tRNA(Pro). As ProRS can inadvertently accommodate and process non-cognate amino acids such as alanine and cysteine, to avoid such errors it has two additional distinct editing activities against alanine. One activity is designated as 'pretransfer' editing and involves the tRNA(Pro)-independent hydrolysis of activated Ala-AMP. The other activity is designated 'posttransfer' editing and involves deacylation of mischarged Ala-tRNA(Pro). The misacylated Cys-tRNA(Pro) is not edited by ProRS. The chain is Proline--tRNA ligase from Polaromonas naphthalenivorans (strain CJ2).